The primary structure comprises 402 residues: Putative neuropeptide Y receptor 11 (402 aa).

Topologically, residues 1 to 45 (MGSVNESCDNYVEIFNKINYFFRDDQVINGTEYSPKEFGYFITFA) are extracellular. N5 and N29 each carry an N-linked (GlcNAc...) asparagine glycan. The chain crosses the membrane as a helical span at residues 46 to 66 (YMLIILFGAIGNFLTIIVVIL). At 67–85 (NPAMRTTRNFFILNLALSD) the chain is on the cytoplasmic side. The helical transmembrane segment at 86-106 (FFVCIVTAPTTLYTVLYMFWP) threads the bilayer. Residues 107-122 (FSRTLCKIAGSLQGFN) lie on the Extracellular side of the membrane. A disulfide bond links C112 and C194. The chain crosses the membrane as a helical span at residues 123-143 (IFLSTFSIASIAVDRYVLIIF). The Cytoplasmic segment spans residues 144–152 (PTKRERQQN). A helical transmembrane segment spans residues 153 to 173 (LSFCFFIMIWVISLILAVPLL). Topologically, residues 174-210 (QASDLTPVFVEPSCDLALYICHEQNEIWEKMIISKGT) are extracellular. Residues 211-231 (YTLAVLITQYAFPLFSLVFAY) form a helical membrane-spanning segment. The Cytoplasmic portion of the chain corresponds to 232–272 (SRIAHRMKLRFANRNQNVTTNTNTSQRRRSVVERQRRTHLL). A helical membrane pass occupies residues 273–293 (LVCVVAVFAVAWLPLNVFHIF). The Extracellular portion of the chain corresponds to 294–306 (NTFELVNSFSVTT). The helical transmembrane segment at 307 to 328 (FSICHCLAMCSACLNPLIYAFF) threads the bilayer. The Cytoplasmic portion of the chain corresponds to 329–402 (NHNFRIEFMH…LSAMEQDEQL (74 aa)).

Belongs to the G-protein coupled receptor 1 family.

Its subcellular location is the cell membrane. Could be a receptor for neuropeptide Y and peptide YY. This chain is Putative neuropeptide Y receptor 11 (npr-11), found in Caenorhabditis elegans.